The sequence spans 217 residues: Oxygen-evolving enhancer protein 3-1, chloroplastic (217 aa).

The transit peptide at 1-68 directs the protein to the chloroplast; it reads MAQAMASMTG…GGALSQAARA (68 aa).

Belongs to the PsbQ family.

It localises to the plastid. The protein resides in the chloroplast thylakoid membrane. This is Oxygen-evolving enhancer protein 3-1, chloroplastic (PSBQ1) from Zea mays (Maize).